Consider the following 122-residue polypeptide: Small ribosomal subunit protein bS6 (122 aa).

The disordered stretch occupies residues 95 to 122 (AETAPSPMMKEVQREEAKKAAAQSEQAA).

It belongs to the bacterial ribosomal protein bS6 family.

In terms of biological role, binds together with bS18 to 16S ribosomal RNA. This is Small ribosomal subunit protein bS6 from Ralstonia nicotianae (strain ATCC BAA-1114 / GMI1000) (Ralstonia solanacearum).